The sequence spans 541 residues: Periplasmic oligopeptide-binding protein OppA (541 aa).

A signal peptide spans 1–20; it reads MQHKLLFSAIALALSYSAQA.

This sequence belongs to the bacterial solute-binding protein 5 family. The complex is composed of two ATP-binding proteins (OppD and OppF), two transmembrane proteins (OppB and OppC) and a solute-binding protein (OppA).

The protein resides in the periplasm. Functionally, part of the ABC transporter complex OppABCDF involved in the uptake of oligopeptides. Plays an important nutritional role. Binds peptides containing from two to five amino acid residues. This chain is Periplasmic oligopeptide-binding protein OppA (oppA), found in Haemophilus influenzae (strain ATCC 51907 / DSM 11121 / KW20 / Rd).